The following is a 580-amino-acid chain: MNLFAEMRALVLECVDQMVTAGQLPADLNMTNVTVEPPRDAAHGDMATNAAMVLAKPAGKKPRDIAEALAQLLAADARIASAEVAGPGFLNLRIAPTAWRAVLLSVLDKGTDFGRADIGAGQKVNVEYVSANPTGPLHVGHTRGAVFGDALASLLDYAGFDVTREYYINDGGAQVDVLARSVYLRYLEAHGQEVAFPDGTYPGDYLIPVGQQLKDLKGDSYVGQPEEAWLQDIRTFATDAMMDLIRADLKSLGVEMDVFYSEKSLYGTGRIEAAIEDLKSKGLIYDGVLEPPKGKKPEDWEPREQTLFKSTEHGDDVDRPVMKSDGSWTYFAPDIAYHYDKVSRGYDALIDVFGADHGGYVKRMKAAVSALSDGKVPLDIKLTQLVKLFKNGEPFKMSKRAGTFVTLRDVVDQVGPDVARFVMLTRKNDAMLDFDFDKVMEQSRENPVFYVQYAHARVASVMRKAEAAGIAVDMDTLKAADLSLLNHEAELGLIAKLSEWPRLVETAARSNEPHRVAFYLYELSGVFHGLWNRGNDVPELRFVQDDPKVTQAKIALARACSVVIAAGLGILGVTPAQEMR.

The 'HIGH' region signature appears at 131 to 141; that stretch reads ANPTGPLHVGH.

It belongs to the class-I aminoacyl-tRNA synthetase family. As to quaternary structure, monomer.

The protein resides in the cytoplasm. The catalysed reaction is tRNA(Arg) + L-arginine + ATP = L-arginyl-tRNA(Arg) + AMP + diphosphate. This is Arginine--tRNA ligase from Roseobacter denitrificans (strain ATCC 33942 / OCh 114) (Erythrobacter sp. (strain OCh 114)).